The primary structure comprises 314 residues: Olfactory receptor-like protein I9 (314 aa).

Topologically, residues 1-25 (MTRRNQTAISQFFLLGLPFPPEYQH) are extracellular. N5 carries an N-linked (GlcNAc...) asparagine glycan. A helical membrane pass occupies residues 26–50 (LFYALFLAMYLTTLLGNLIIIILIL). Residues 51–57 (LDSHLHT) lie on the Cytoplasmic side of the membrane. Residues 58-79 (PMYLFLSNLSFADLCFSSVTMP) form a helical membrane-spanning segment. The Extracellular segment spans residues 80–100 (KLLQNMQSQVPSIPYAGCLAQ). Residues C97 and C189 are joined by a disulfide bond. A helical transmembrane segment spans residues 101–120 (IYFFLFFGDLGNFLLVAMAY). Topologically, residues 121–139 (DRYVAICFPLHYMSIMSPK) are cytoplasmic. Residues 140–158 (LCVSLVVLSWVLTTFHAML) form a helical membrane-spanning segment. The Extracellular portion of the chain corresponds to 159-196 (HTLLMARLSFCEDSVIPHYFCDMSTLLKVACSDTHDNE). Residues 197 to 219 (LAIFILGGPIVVLPFLLIIVSYA) traverse the membrane as a helical segment. Residues 220 to 236 (RIVSSIFKVPSSQSIHK) lie on the Cytoplasmic side of the membrane. Residues 237-260 (AFSTCGSHLSVVSLFYGTVIGLYL) form a helical membrane-spanning segment. Residues 261–272 (CPSANNSTVKET) are Extracellular-facing. The helical transmembrane segment at 273-292 (VMSLMYTMVTPMLNPFIYSL) threads the bilayer. The Cytoplasmic portion of the chain corresponds to 293–314 (RNRDIKDALEKIMCKKQIPSFL).

The protein belongs to the G-protein coupled receptor 1 family. As to expression, olfactory epithelium.

Its subcellular location is the cell membrane. Functionally, odorant receptor. The chain is Olfactory receptor-like protein I9 from Rattus norvegicus (Rat).